A 587-amino-acid chain; its full sequence is Beta-(1--&gt;2)glucan export ATP-binding/permease protein NdvA (587 aa).

Positions 21-301 (VSLVVIANIV…MRQFATQIFE (281 aa)) constitute an ABC transmembrane type-1 domain. Transmembrane regions (helical) follow at residues 23-43 (LVVI…ILFG), 57-77 (PILF…VLVS), 126-146 (LFGL…ALAL), 158-178 (LSAV…VVMS), 248-268 (MAST…VQSG), and 272-292 (IGDV…LDLM). Residues 335 to 569 (IEFRDVSFGF…NGRFAALLRA (235 aa)) enclose the ABC transporter domain. An ATP-binding site is contributed by 368–375 (GPTGAGKT).

This sequence belongs to the ABC transporter superfamily. Beta-(1--&gt;2)glucan exporter (TC 3.A.1.108.1) family. As to quaternary structure, homodimer.

The protein resides in the cell inner membrane. The enzyme catalyses [(1-&gt;2)-beta-D-glucosyl](n)(in) + ATP + H2O = [(1-&gt;2)-beta-D-glucosyl](n)(out) + ADP + phosphate + H(+). Its function is as follows. Involved in beta-(1--&gt;2)glucan export. Transmembrane domains (TMD) form a pore in the inner membrane and the ATP-binding domain (NBD) is responsible for energy generation. The chain is Beta-(1--&gt;2)glucan export ATP-binding/permease protein NdvA from Rhizobium etli (strain ATCC 51251 / DSM 11541 / JCM 21823 / NBRC 15573 / CFN 42).